Consider the following 310-residue polypeptide: L-lactate dehydrogenase (310 aa).

NAD(+) contacts are provided by residues V11, D32, Y62, and 76–77 (GV). Substrate is bound by residues Q79, R85, and 117–120 (NPVD). NAD(+) is bound by residues 115–117 (ATN) and S140. 145–148 (DTAR) contributes to the substrate binding site. Beta-D-fructose 1,6-bisphosphate-binding residues include R150 and H165. Residue H172 is the Proton acceptor of the active site. Y218 bears the Phosphotyrosine mark. T227 provides a ligand contact to substrate.

It belongs to the LDH/MDH superfamily. LDH family. Homotetramer.

It is found in the cytoplasm. The catalysed reaction is (S)-lactate + NAD(+) = pyruvate + NADH + H(+). It participates in fermentation; pyruvate fermentation to lactate; (S)-lactate from pyruvate: step 1/1. Its activity is regulated as follows. Allosterically activated by fructose 1,6-bisphosphate (FBP). In terms of biological role, catalyzes the conversion of lactate to pyruvate. The protein is L-lactate dehydrogenase of Thermus thermophilus (strain ATCC BAA-163 / DSM 7039 / HB27).